The chain runs to 110 residues: Large ribosomal subunit protein uL22 (110 aa).

It belongs to the universal ribosomal protein uL22 family. As to quaternary structure, part of the 50S ribosomal subunit.

Functionally, this protein binds specifically to 23S rRNA; its binding is stimulated by other ribosomal proteins, e.g. L4, L17, and L20. It is important during the early stages of 50S assembly. It makes multiple contacts with different domains of the 23S rRNA in the assembled 50S subunit and ribosome. In terms of biological role, the globular domain of the protein is located near the polypeptide exit tunnel on the outside of the subunit, while an extended beta-hairpin is found that lines the wall of the exit tunnel in the center of the 70S ribosome. This chain is Large ribosomal subunit protein uL22, found in Shewanella loihica (strain ATCC BAA-1088 / PV-4).